A 376-amino-acid chain; its full sequence is Putative glutamate--cysteine ligase 2 (376 aa).

Belongs to the glutamate--cysteine ligase type 2 family. YbdK subfamily.

It carries out the reaction L-cysteine + L-glutamate + ATP = gamma-L-glutamyl-L-cysteine + ADP + phosphate + H(+). In terms of biological role, ATP-dependent carboxylate-amine ligase which exhibits weak glutamate--cysteine ligase activity. The protein is Putative glutamate--cysteine ligase 2 of Corynebacterium glutamicum (strain R).